Reading from the N-terminus, the 216-residue chain is Thymidine kinase (216 aa).

ATP contacts are provided by residues 9 to 16 and 86 to 89; these read GPMDSGKS and DEAQ. The active-site Proton acceptor is glutamate 87.

It belongs to the thymidine kinase family. In terms of assembly, homotetramer.

The protein resides in the cytoplasm. It catalyses the reaction thymidine + ATP = dTMP + ADP + H(+). The sequence is that of Thymidine kinase from Cutibacterium acnes (strain DSM 16379 / KPA171202) (Propionibacterium acnes).